The following is a 672-amino-acid chain: UvrABC system protein B (672 aa).

One can recognise a Helicase ATP-binding domain in the interval Ala-26 to Tyr-181. Gly-39–Thr-46 is a binding site for ATP. The Beta-hairpin signature appears at Tyr-92–Ile-115. The 163-residue stretch at Gln-430–Val-592 folds into the Helicase C-terminal domain. The 36-residue stretch at Ala-631–Gly-666 folds into the UVR domain.

Belongs to the UvrB family. As to quaternary structure, forms a heterotetramer with UvrA during the search for lesions. Interacts with UvrC in an incision complex.

It is found in the cytoplasm. Functionally, the UvrABC repair system catalyzes the recognition and processing of DNA lesions. A damage recognition complex composed of 2 UvrA and 2 UvrB subunits scans DNA for abnormalities. Upon binding of the UvrA(2)B(2) complex to a putative damaged site, the DNA wraps around one UvrB monomer. DNA wrap is dependent on ATP binding by UvrB and probably causes local melting of the DNA helix, facilitating insertion of UvrB beta-hairpin between the DNA strands. Then UvrB probes one DNA strand for the presence of a lesion. If a lesion is found the UvrA subunits dissociate and the UvrB-DNA preincision complex is formed. This complex is subsequently bound by UvrC and the second UvrB is released. If no lesion is found, the DNA wraps around the other UvrB subunit that will check the other stand for damage. In Coxiella burnetii (strain CbuG_Q212) (Coxiella burnetii (strain Q212)), this protein is UvrABC system protein B.